A 902-amino-acid chain; its full sequence is DNA mismatch repair protein MutS (902 aa).

647–654 (GPNMGGKS) provides a ligand contact to ATP.

The protein belongs to the DNA mismatch repair MutS family.

Functionally, this protein is involved in the repair of mismatches in DNA. It is possible that it carries out the mismatch recognition step. This protein has a weak ATPase activity. This is DNA mismatch repair protein MutS from Nitrosospira multiformis (strain ATCC 25196 / NCIMB 11849 / C 71).